We begin with the raw amino-acid sequence, 338 residues long: Aspartate carbamoyltransferase catalytic subunit (338 aa).

Carbamoyl phosphate is bound by residues Arg72 and Thr73. Lys100 provides a ligand contact to L-aspartate. Residues Arg122, His152, and Gln155 each contribute to the carbamoyl phosphate site. 2 residues coordinate L-aspartate: Arg186 and Arg243. Gly284 and Pro285 together coordinate carbamoyl phosphate.

It belongs to the aspartate/ornithine carbamoyltransferase superfamily. ATCase family. Heterododecamer (2C3:3R2) of six catalytic PyrB chains organized as two trimers (C3), and six regulatory PyrI chains organized as three dimers (R2).

It carries out the reaction carbamoyl phosphate + L-aspartate = N-carbamoyl-L-aspartate + phosphate + H(+). Its pathway is pyrimidine metabolism; UMP biosynthesis via de novo pathway; (S)-dihydroorotate from bicarbonate: step 2/3. In terms of biological role, catalyzes the condensation of carbamoyl phosphate and aspartate to form carbamoyl aspartate and inorganic phosphate, the committed step in the de novo pyrimidine nucleotide biosynthesis pathway. The sequence is that of Aspartate carbamoyltransferase catalytic subunit from Acinetobacter baylyi (strain ATCC 33305 / BD413 / ADP1).